The sequence spans 100 residues: uncharacterized protein (100 aa).

Transmembrane regions (helical) follow at residues 7 to 28 (TLIGLIVGLLFGLSGIATLLSL), 38 to 60 (AQLSQLGVASTLVMLVIALILII), and 65 to 87 (LSALIVGAVIGAVLNLVLQANGV).

The protein localises to the cell membrane. This is an uncharacterized protein from Archaeoglobus fulgidus (strain ATCC 49558 / DSM 4304 / JCM 9628 / NBRC 100126 / VC-16).